The sequence spans 435 residues: Serine--tRNA ligase (435 aa).

Residue Thr-233–Glu-235 participates in L-serine binding. Arg-264–Glu-266 serves as a coordination point for ATP. L-serine is bound at residue Glu-287. Residue Glu-351–Ser-354 participates in ATP binding. L-serine is bound at residue Ser-386.

It belongs to the class-II aminoacyl-tRNA synthetase family. Type-1 seryl-tRNA synthetase subfamily. As to quaternary structure, homodimer. The tRNA molecule binds across the dimer.

The protein localises to the cytoplasm. It carries out the reaction tRNA(Ser) + L-serine + ATP = L-seryl-tRNA(Ser) + AMP + diphosphate + H(+). The catalysed reaction is tRNA(Sec) + L-serine + ATP = L-seryl-tRNA(Sec) + AMP + diphosphate + H(+). It functions in the pathway aminoacyl-tRNA biosynthesis; selenocysteinyl-tRNA(Sec) biosynthesis; L-seryl-tRNA(Sec) from L-serine and tRNA(Sec): step 1/1. Its function is as follows. Catalyzes the attachment of serine to tRNA(Ser). Is also able to aminoacylate tRNA(Sec) with serine, to form the misacylated tRNA L-seryl-tRNA(Sec), which will be further converted into selenocysteinyl-tRNA(Sec). The chain is Serine--tRNA ligase from Anaeromyxobacter sp. (strain K).